Consider the following 149-residue polypeptide: MSAKSRILVLNGPNINLLGLREPGHYGHQTLPQIVDTLTQQAQTAGIELEHLQSNREYELIEAIHAAHGNVDFIIINPAAFTHTSVALRDALLGVAIPFIEVHLSNVHAREPFRHHSYLSDKALGVICGLGAQGYEFALSAAIARLQAK.

Tyr26 serves as the catalytic Proton acceptor. 3 residues coordinate substrate: Asn77, His83, and Asp90. His103 functions as the Proton donor in the catalytic mechanism. Substrate is bound by residues 104–105 (LS) and Arg114.

It belongs to the type-II 3-dehydroquinase family. In terms of assembly, homododecamer.

The enzyme catalyses 3-dehydroquinate = 3-dehydroshikimate + H2O. It participates in metabolic intermediate biosynthesis; chorismate biosynthesis; chorismate from D-erythrose 4-phosphate and phosphoenolpyruvate: step 3/7. Functionally, catalyzes a trans-dehydration via an enolate intermediate. The polypeptide is 3-dehydroquinate dehydratase (Vibrio vulnificus (strain YJ016)).